Reading from the N-terminus, the 643-residue chain is MHGLMLAGLLALPLSVLGHPTESHSSGISRRAIDITSYRLPQISKYTKSDAVPKQDGESFTTSSTGNDNSSSGDYVTTATNWLKKTLPKATYRLVKDHYIGDSGIGHVHFRQTAHGIDIDNTDFNVNIGRDGKVFSFGNSFYDGEIPKANPMVKRDFSDPVNALHGAIQILNLPVTAKPENVKAKPVEGKENFKFEGTSGALSDPKAQLVYLQKDGGLVLSWKVETDVGDNWLLTYVDANKNDKVHSVVDYVSAAEYQVYPWGINDPTEGNRTTLHLPWLKTLSTDWHIDGKGWYSTTRGNNAIAQENPTGGPEYENNYRPKSPLFIFKYPYSKAMTPPSSYRDASITQLFYTTNVYHDVLYILGFNEKAGNFQINNWNKGGVGGDYAILNSQDGSGVNNANFATPPDGQPGRMRMYTWNASIPERDGCFEAGIVIHEYTHGVSNRLTGGPENSRCLAALESGGMGEGWSDFFATAIRLKPGDTRVTDYTMGEWASNRPNGIRKYRYSTSLTTNPHMYVDADGLTSVHAIGNIWASMLYELLWNLIDKHGKGDVTKIRPVLKNGVPTDGRHLAMKIVLDGMALQPCLPNFVQARDAILDADKNLTQGSNKCEIWKAFAKRGLGVGAVFNLSKRTGSNELPAGC.

A signal peptide spans 1-18 (MHGLMLAGLLALPLSVLG). Residues 19–254 (HPTESHSSGI…VHSVVDYVSA (236 aa)) constitute a propeptide that is removed on maturation. The segment covering 47–57 (TKSDAVPKQDG) has biased composition (basic and acidic residues). A disordered region spans residues 47–73 (TKSDAVPKQDGESFTTSSTGNDNSSSG). The span at 61-73 (TTSSTGNDNSSSG) shows a compositional bias: low complexity. Asn271 and Asn420 each carry an N-linked (GlcNAc...) asparagine glycan. Zn(2+) is bound at residue His437. Glu438 is a catalytic residue. Residue His441 participates in Zn(2+) binding. 2 N-linked (GlcNAc...) asparagine glycosylation sites follow: Asn603 and Asn629.

It belongs to the peptidase M36 family. Zn(2+) is required as a cofactor.

The protein localises to the secreted. Secreted metalloproteinase probably acting as a virulence factor. This chain is Extracellular metalloproteinase 4 (MEP4), found in Trichophyton rubrum (Athlete's foot fungus).